Consider the following 52-residue polypeptide: Conotoxin reg3h (52 aa).

Residue Ala-1 is a signal peptide. The propeptide occupies 2-33 (LPLDGDQPADQPAERMQDISPELNPLFHPVKR). Cystine bridges form between Cys-35–Cys-49, Cys-36–Cys-47, and Cys-41–Cys-50. 3 positions are modified to 4-hydroxyproline: Pro-38, Pro-48, and Pro-51. An Asparagine amide modification is found at Asn-52.

In terms of tissue distribution, expressed by the venom duct.

The protein resides in the secreted. This is Conotoxin reg3h from Conus regius (Crown cone).